The sequence spans 340 residues: DNA repair protein RAD51 homolog B (340 aa).

Residues 1-22 (MSSSSAHQKASPPIEEEATEHG) are disordered. Residues 49–78 (TVESVAYSPRKDLLQIKGISEAKVDKIIEA) form the HhH domain. 128–135 (GEFRSGKT) contributes to the ATP binding site.

This sequence belongs to the RecA family. RAD51 subfamily. Self-associates and may interact with XRCC3 homolog. Highly expressed in mitotic and meiotic tissues, but low levels in differentiated tissues.

Its subcellular location is the nucleus. Binds to single and double-stranded DNA and exhibits DNA-dependent ATPase activity. Unwinds duplex DNA. Component of the meiotic recombination pathway. Seems to play a role in mediating chromosome homology search, chromosome pairing and synapsis at early stages and probably chromosome crossing-over at later stages in meiosis. Probably is involved in the repair of meiotic double strand breaks (DBSs) and in homologous recombination. This Zea mays (Maize) protein is DNA repair protein RAD51 homolog B (RAD51B).